Reading from the N-terminus, the 497-residue chain is Glutamyl-tRNA(Gln) amidotransferase subunit A (497 aa).

Active-site charge relay system residues include Lys-91 and Ser-166. Residues 143–171 form a disordered region; the sequence is SSTENSAYGPTHNPWDLERTAGGSGGGSS. Catalysis depends on Ser-190, which acts as the Acyl-ester intermediate.

It belongs to the amidase family. GatA subfamily. As to quaternary structure, heterotrimer of A, B and C subunits.

It catalyses the reaction L-glutamyl-tRNA(Gln) + L-glutamine + ATP + H2O = L-glutaminyl-tRNA(Gln) + L-glutamate + ADP + phosphate + H(+). Functionally, allows the formation of correctly charged Gln-tRNA(Gln) through the transamidation of misacylated Glu-tRNA(Gln) in organisms which lack glutaminyl-tRNA synthetase. The reaction takes place in the presence of glutamine and ATP through an activated gamma-phospho-Glu-tRNA(Gln). In Corynebacterium glutamicum (strain ATCC 13032 / DSM 20300 / JCM 1318 / BCRC 11384 / CCUG 27702 / LMG 3730 / NBRC 12168 / NCIMB 10025 / NRRL B-2784 / 534), this protein is Glutamyl-tRNA(Gln) amidotransferase subunit A.